We begin with the raw amino-acid sequence, 62 residues long: Large ribosomal subunit protein bL28 (62 aa).

Belongs to the bacterial ribosomal protein bL28 family.

The protein is Large ribosomal subunit protein bL28 of Streptococcus gordonii (strain Challis / ATCC 35105 / BCRC 15272 / CH1 / DL1 / V288).